Here is a 521-residue protein sequence, read N- to C-terminus: Cytochrome b5 reductase 4 (521 aa).

At methionine 1 the chain carries N-acetylmethionine. Residues methionine 1–valine 18 show a composition bias toward polar residues. Positions methionine 1–proline 27 are disordered. The 77-residue stretch at leucine 54 to alanine 130 folds into the Cytochrome b5 heme-binding domain. Positions 89 and 112 each coordinate heme. A CS domain is found at proline 165–glycine 256. Residues leucine 273–serine 385 enclose the FAD-binding FR-type domain. FAD contacts are provided by residues aspartate 365–glycine 380 and aspartate 392–leucine 424.

This sequence belongs to the flavoprotein pyridine nucleotide cytochrome reductase family. Requires FAD as cofactor. Widely expressed.

Its subcellular location is the endoplasmic reticulum. The enzyme catalyses 2 Fe(III)-[cytochrome b5] + NADH = 2 Fe(II)-[cytochrome b5] + NAD(+) + H(+). In terms of biological role, NADH-cytochrome b5 reductase involved in endoplasmic reticulum stress response pathway. Plays a critical role in protecting pancreatic beta-cells against oxidant stress, possibly by protecting the cell from excess buildup of reactive oxygen species (ROS). Reduces a variety of substrates in vitro, such as cytochrome c, feericyanide and methemoglobin. The protein is Cytochrome b5 reductase 4 of Homo sapiens (Human).